Consider the following 39-residue polypeptide: uncharacterized protein (39 aa).

This is an uncharacterized protein from Bacillus subtilis (strain 168).